The following is a 1131-amino-acid chain: Chitin synthase 1 (1131 aa).

A compositionally biased stretch (basic and acidic residues) spans 1–20 (MSDQNNRSRNEYHSNRKNEP). Residues 1–22 (MSDQNNRSRNEYHSNRKNEPSY) are disordered. Residues Ser-34, Ser-35, Ser-270, Ser-299, and Ser-318 each carry the phosphoserine modification. Residues 282 to 305 (YLHDDSRPVNDGKEELDSVKSGYS) are disordered. Residue Thr-328 is modified to Phosphothreonine. The residue at position 358 (Ser-358) is a Phosphoserine. The next 7 helical transmembrane spans lie at 795–815 (FFYL…FFLV), 833–853 (VLSV…FILS), 866–886 (VLTC…SIFM), 914–934 (IVIS…IYLQ), 942–962 (FIQY…YAFC), 1042–1062 (LVII…LETG), and 1101–1121 (ILWL…IYMI).

This sequence belongs to the chitin synthase family.

It localises to the cell membrane. The enzyme catalyses [(1-&gt;4)-N-acetyl-beta-D-glucosaminyl](n) + UDP-N-acetyl-alpha-D-glucosamine = [(1-&gt;4)-N-acetyl-beta-D-glucosaminyl](n+1) + UDP + H(+). With respect to regulation, requires proteolytic activation. Polymerizes chitin, a structural polymer of the cell wall and septum, by transferring the sugar moiety of UDP-GlcNAc to the non-reducing end of the growing chitin polymer. Required for mitotic division septum formation during adverse conditions. The protein is Chitin synthase 1 (CHS1) of Saccharomyces cerevisiae (strain ATCC 204508 / S288c) (Baker's yeast).